Here is a 217-residue protein sequence, read N- to C-terminus: Uridylate kinase (217 aa).

6–10 (KLSGR) lines the ATP pocket. UMP is bound at residue Gly-38. Residues Gly-39 and Arg-43 each coordinate ATP. UMP is bound by residues Asp-60 and 107–113 (FQPGQST). Positions 134, 139, and 142 each coordinate ATP.

Belongs to the UMP kinase family. In terms of assembly, homohexamer.

Its subcellular location is the cytoplasm. The catalysed reaction is UMP + ATP = UDP + ADP. It participates in pyrimidine metabolism; CTP biosynthesis via de novo pathway; UDP from UMP (UMPK route): step 1/1. Its activity is regulated as follows. Inhibited by UTP. Its function is as follows. Catalyzes the reversible phosphorylation of UMP to UDP. The polypeptide is Uridylate kinase (Pyrobaculum neutrophilum (strain DSM 2338 / JCM 9278 / NBRC 100436 / V24Sta) (Thermoproteus neutrophilus)).